Reading from the N-terminus, the 105-residue chain is Small ribosomal subunit protein uS10 (105 aa).

This sequence belongs to the universal ribosomal protein uS10 family. As to quaternary structure, part of the 30S ribosomal subunit.

Functionally, involved in the binding of tRNA to the ribosomes. The sequence is that of Small ribosomal subunit protein uS10 from Rickettsia bellii (strain OSU 85-389).